Reading from the N-terminus, the 644-residue chain is Chaperone protein DnaK (644 aa).

The residue at position 199 (Thr-199) is a Phosphothreonine; by autocatalysis. The segment at 602–644 is disordered; that stretch reads LYAEQSAQQQGSAGATGGEQPKADKAADDGVVDAEFEEVKDDK. The segment covering 604–614 has biased composition (low complexity); sequence AEQSAQQQGSA. Over residues 631–644 the composition is skewed to acidic residues; the sequence is GVVDAEFEEVKDDK.

It belongs to the heat shock protein 70 family.

Its function is as follows. Acts as a chaperone. In Teredinibacter turnerae (strain ATCC 39867 / T7901), this protein is Chaperone protein DnaK.